We begin with the raw amino-acid sequence, 356 residues long: Arginine kinase Lit v 2.0101 (356 aa).

Residues 9–91 form the Phosphagen kinase N-terminal domain; the sequence is KLEAGFKKLE…FDPIIEDYHV (83 aa). Residue 64 to 68 participates in L-arginine binding; the sequence is GVGIY. The 238-residue stretch at 119-356 folds into the Phosphagen kinase C-terminal domain; sequence FVISTRVRCG…LELIKIEKEM (238 aa). ATP is bound by residues 122-126 and His185; that span reads STRVR. L-arginine is bound at residue Glu225. Arg229 is a binding site for ATP. Position 271 (Cys271) interacts with L-arginine. ATP-binding positions include 280–284 and 309–314; these read RASVH and RGTRGE. Glu314 lines the L-arginine pocket.

This sequence belongs to the ATP:guanido phosphotransferase family. As to quaternary structure, monomer. In terms of tissue distribution, muscle (at protein level).

The catalysed reaction is L-arginine + ATP = N(omega)-phospho-L-arginine + ADP + H(+). It catalyses the reaction dTDP + ATP = dTTP + ADP. Catalyzes the reversible transfer of high energy ATP gamma-phosphate group to L-arginine. Has nucleoside diphosphate kinase-like activity toward dTDP. Binds and phosphorylates dTDP using ATP as a phosphate donor. Does not phosphorylate dADP, dCDP, dGDP, dTMP or thymidine. The sequence is that of Arginine kinase Lit v 2.0101 from Penaeus vannamei (Whiteleg shrimp).